Here is a 263-residue protein sequence, read N- to C-terminus: Type III pantothenate kinase (263 aa).

9–16 lines the ATP pocket; the sequence is DIGNTSIK. Residues tyrosine 103 and 110-113 contribute to the substrate site; that span reads GADR. Aspartate 112 functions as the Proton acceptor in the catalytic mechanism. Residue aspartate 134 coordinates K(+). Threonine 137 is an ATP binding site. Threonine 190 serves as a coordination point for substrate.

Belongs to the type III pantothenate kinase family. Homodimer. The cofactor is NH4(+). Requires K(+) as cofactor.

It localises to the cytoplasm. The enzyme catalyses (R)-pantothenate + ATP = (R)-4'-phosphopantothenate + ADP + H(+). It functions in the pathway cofactor biosynthesis; coenzyme A biosynthesis; CoA from (R)-pantothenate: step 1/5. Its function is as follows. Catalyzes the phosphorylation of pantothenate (Pan), the first step in CoA biosynthesis. This Desulfovibrio desulfuricans (strain ATCC 27774 / DSM 6949 / MB) protein is Type III pantothenate kinase.